A 247-amino-acid polypeptide reads, in one-letter code: Carboxy-S-adenosyl-L-methionine synthase (247 aa).

S-adenosyl-L-methionine-binding positions include Y39, G64–S66, D89–N90, D117–I118, N132, and R199.

This sequence belongs to the class I-like SAM-binding methyltransferase superfamily. Cx-SAM synthase family. Homodimer.

The catalysed reaction is prephenate + S-adenosyl-L-methionine = carboxy-S-adenosyl-L-methionine + 3-phenylpyruvate + H2O. Its function is as follows. Catalyzes the conversion of S-adenosyl-L-methionine (SAM) to carboxy-S-adenosyl-L-methionine (Cx-SAM). The sequence is that of Carboxy-S-adenosyl-L-methionine synthase from Escherichia coli O139:H28 (strain E24377A / ETEC).